We begin with the raw amino-acid sequence, 468 residues long: 6-phospho-beta-galactosidase (468 aa).

Positions 19, 116, 159, 160, and 297 each coordinate D-galactose 6-phosphate. Glu-160 serves as the catalytic Proton donor. Residue Glu-375 is the Nucleophile of the active site. Positions 428, 429, 435, and 437 each coordinate D-galactose 6-phosphate.

Belongs to the glycosyl hydrolase 1 family.

It catalyses the reaction a 6-phospho-beta-D-galactoside + H2O = D-galactose 6-phosphate + an alcohol. It functions in the pathway carbohydrate metabolism; lactose degradation; D-galactose 6-phosphate and beta-D-glucose from lactose 6-phosphate: step 1/1. This is 6-phospho-beta-galactosidase from Streptococcus gordonii (strain Challis / ATCC 35105 / BCRC 15272 / CH1 / DL1 / V288).